We begin with the raw amino-acid sequence, 423 residues long: D-tagatose-1,6-bisphosphate aldolase subunit GatZ (423 aa).

The protein belongs to the GatZ/KbaZ family. GatZ subfamily. In terms of assembly, forms a complex with GatY.

It functions in the pathway carbohydrate metabolism; D-tagatose 6-phosphate degradation; D-glyceraldehyde 3-phosphate and glycerone phosphate from D-tagatose 6-phosphate: step 2/2. In terms of biological role, component of the tagatose-1,6-bisphosphate aldolase GatYZ that is required for full activity and stability of the Y subunit. Could have a chaperone-like function for the proper and stable folding of GatY. When expressed alone, GatZ does not show any aldolase activity. Is involved in the catabolism of galactitol. In Salmonella typhimurium (strain LT2 / SGSC1412 / ATCC 700720), this protein is D-tagatose-1,6-bisphosphate aldolase subunit GatZ.